The sequence spans 549 residues: Inner kinetochore subunit MIF2 (549 aa).

Positions 47 to 275 (RKSRRKSSLF…RRQASDVVRT (229 aa)) are disordered. Polar residues-rich tracts occupy residues 56–65 (FLPSTLNGDT) and 96–108 (RSSL…NFLS). Over residues 114–124 (EPIEEEPEQEE) the composition is skewed to acidic residues. Polar residues predominate over residues 151–163 (TRYSLDTSESPSV). Over residues 203-225 (LLEDELEDDGFIPESEEDGDYIE) the composition is skewed to acidic residues. Over residues 226-237 (SDSSLDSGSDSA) the composition is skewed to low complexity. Positions 238 to 262 (SDSDGDNTYQEVEEEAEVNTNDNED) are enriched in acidic residues. Positions 263–275 (DYIRRQASDVVRT) are enriched in basic and acidic residues. Residue Ser325 is modified to Phosphoserine. A compositionally biased stretch (basic residues) spans 335–345 (QRRKKQKKKPT). Positions 335–374 (QRRKKQKKKPTPTRPYNYVPTGRPRGRPKKDPNAKENLIP) are disordered. The segment at residues 356-364 (GRPRGRPKK) is a DNA-binding region (a.T hook).

The protein belongs to the CENP-C/MIF2 family. Component of the inner kinetochore constitutive centromere-associated network (CCAN) (also known as central kinetochore CTF19 complex in yeast), which is composed of at least AME1, CHL4, CNN1, CTF3, CTF19, IML3, MCM16, MCM21, MCM22, MHF1, MHF2, MIF2, NKP1, NKP2, OKP1 and WIP1. Interacts with CBF1.

It localises to the nucleus. The protein localises to the chromosome. Its subcellular location is the centromere. The protein resides in the kinetochore. Functionally, component of the kinetochore, a multiprotein complex that assembles on centromeric DNA and attaches chromosomes to spindle microtubules, mediating chromosome segregation and sister chromatid segregation during meiosis and mitosis. Component of the inner kinetochore constitutive centromere-associated network (CCAN), which serves as a structural platform for outer kinetochore assembly. This chain is Inner kinetochore subunit MIF2 (MIF2), found in Saccharomyces cerevisiae (strain ATCC 204508 / S288c) (Baker's yeast).